The sequence spans 210 residues: Outer-membrane lipoprotein carrier protein (210 aa).

A signal peptide spans 1–23 (MLMFSRFRYIFFAVALLSGPVCA).

The protein belongs to the LolA family. Monomer.

It localises to the periplasm. In terms of biological role, participates in the translocation of lipoproteins from the inner membrane to the outer membrane. Only forms a complex with a lipoprotein if the residue after the N-terminal Cys is not an aspartate (The Asp acts as a targeting signal to indicate that the lipoprotein should stay in the inner membrane). This is Outer-membrane lipoprotein carrier protein from Xylella fastidiosa (strain Temecula1 / ATCC 700964).